The primary structure comprises 994 residues: Translocase of chloroplast 108, chloroplastic (994 aa).

Disordered stretches follow at residues 14 to 61 (KEAS…EDEP), 84 to 124 (TTDL…DPSV), and 152 to 287 (AVDG…DETR). Polar residues-rich tracts occupy residues 37–53 (GETT…ANES) and 84–98 (TTDL…TPSN). A compositionally biased stretch (basic and acidic residues) spans 99-121 (AEKESPEATEVRIVEEGKLEKAD). Residues 166–197 (NDGDTDANTADEDNENDEDDVDEDEDEDDADM) show a composition bias toward acidic residues. A compositionally biased stretch (polar residues) spans 249–268 (ASDSPGRNTQRPNGALSTQI). Residues 269-280 (TSTTDESASSDA) are compositionally biased toward low complexity. Positions 360 to 589 (DFACTILVLG…KLQETTAPGR (230 aa)) constitute an AIG1-type G domain. The G1 stretch occupies residues 369 to 376 (GKTGVGKS). A GTP-binding site is contributed by 372 to 377 (GVGKSS). Position 376 (serine 376) interacts with Mg(2+). The G2 stretch occupies residues 395–399 (PSTNK). The segment at 416–419 (DTPG) is G3. Residues 488 to 491 (THAS) are G4. Residues histidine 489 and 537-538 (EN) each bind GTP. Residues 537–539 (ENH) are G5. 2 disordered regions span residues 616–659 (LPDE…EDLT) and 691–716 (EAKK…EAGN). Positions 620-643 (QAGESDESDDDEEEEDSDADDYDE) are enriched in acidic residues. The span at 650–659 (LSKEELEDLT) shows a compositional bias: basic and acidic residues. Residues 705-714 (AEAEEAEDEA) are compositionally biased toward acidic residues. Residues 969–989 (MVLIGIVPILRSLINCRFGFG) form a helical membrane-spanning segment.

Belongs to the TRAFAC class TrmE-Era-EngA-EngB-Septin-like GTPase superfamily. AIG1/Toc34/Toc159-like paraseptin GTPase family. TOC159 subfamily. As to quaternary structure, part of the TOC core complex. It depends on Mg(2+) as a cofactor.

The protein localises to the plastid. Its subcellular location is the chloroplast outer membrane. Its function is as follows. GTPase involved in protein precursor import into chloroplasts. Seems to recognize chloroplast-destined precursor proteins and regulate their presentation to the translocation channel through GTP hydrolysis. Probably specialized in the import of nuclear encoded non-photosynthetic preproteins from the cytoplasm to the chloroplast. The chain is Translocase of chloroplast 108, chloroplastic from Physcomitrium patens (Spreading-leaved earth moss).